The following is a 372-amino-acid chain: Cytochrome b (372 aa).

Helical transmembrane passes span 25–45 (FGSM…FLAI), 69–90 (WIMQ…YIHI), 105–125 (WFSG…GYVL), and 170–190 (FFAL…IHII). The heme b site is built by histidine 75 and histidine 89. Positions 174 and 188 each coordinate heme b. Histidine 193 provides a ligand contact to a ubiquinone. The next 4 membrane-spanning stretches (helical) occupy residues 218-238 (YKDM…LSFM), 280-300 (LGGT…PFTH), 312-332 (LAQT…WTAT), and 339-358 (FILI…IMNP).

Belongs to the cytochrome b family. In terms of assembly, the cytochrome bc1 complex contains 3 respiratory subunits (MT-CYB, CYC1 and UQCRFS1), 2 core proteins (UQCRC1 and UQCRC2) and probably 6 low-molecular weight proteins. Requires heme b as cofactor.

It is found in the mitochondrion inner membrane. In terms of biological role, component of the ubiquinol-cytochrome c reductase complex (complex III or cytochrome b-c1 complex) that is part of the mitochondrial respiratory chain. The b-c1 complex mediates electron transfer from ubiquinol to cytochrome c. Contributes to the generation of a proton gradient across the mitochondrial membrane that is then used for ATP synthesis. In Sinomicrurus japonicus (Coral snake), this protein is Cytochrome b (MT-CYB).